Here is a 120-residue protein sequence, read N- to C-terminus: Myohemerythrin (120 aa).

Fe cation contacts are provided by His-26, His-56, Glu-60, His-75, His-79, His-108, and Asp-113.

It belongs to the hemerythrin family. In terms of assembly, monomer.

Its subcellular location is the cytoplasm. Its function is as follows. Myohemerythrin is an oxygen-binding protein found in the retractor muscles of certain worms. The oxygen-binding site contains two iron atoms. In Theromyzon tessulatum (Duck leech), this protein is Myohemerythrin.